Consider the following 177-residue polypeptide: Large ribosomal subunit protein uL6 (177 aa).

It belongs to the universal ribosomal protein uL6 family. Part of the 50S ribosomal subunit.

Its function is as follows. This protein binds to the 23S rRNA, and is important in its secondary structure. It is located near the subunit interface in the base of the L7/L12 stalk, and near the tRNA binding site of the peptidyltransferase center. The chain is Large ribosomal subunit protein uL6 from Psychrobacter arcticus (strain DSM 17307 / VKM B-2377 / 273-4).